Reading from the N-terminus, the 173-residue chain is Bifunctional protein PyrR (173 aa).

Substrate contacts are provided by residues 40-41 (TR), 97-105 (DDVLYTGRT), and arginine 130. The PRPP-binding motif lies at 93–105 (VILIDDVLYTGRT).

Belongs to the purine/pyrimidine phosphoribosyltransferase family. PyrR subfamily. Homodimer and homohexamer; in equilibrium.

The enzyme catalyses UMP + diphosphate = 5-phospho-alpha-D-ribose 1-diphosphate + uracil. In terms of biological role, regulates transcriptional attenuation of the pyrimidine nucleotide (pyr) operon by binding in a uridine-dependent manner to specific sites on pyr mRNA. This disrupts an antiterminator hairpin in the RNA and favors formation of a downstream transcription terminator, leading to a reduced expression of downstream genes. Functionally, also displays a weak uracil phosphoribosyltransferase activity which is not physiologically significant. This Streptococcus pyogenes serotype M6 (strain ATCC BAA-946 / MGAS10394) protein is Bifunctional protein PyrR.